Here is a 158-residue protein sequence, read N- to C-terminus: ATP synthase subunit b' (158 aa).

The helical transmembrane segment at 24-44 (ATLPLMAVQILVLVFLLNAVF) threads the bilayer.

The protein belongs to the ATPase B chain family. In terms of assembly, F-type ATPases have 2 components, F(1) - the catalytic core - and F(0) - the membrane proton channel. F(1) has five subunits: alpha(3), beta(3), gamma(1), delta(1), epsilon(1). F(0) has four main subunits: a(1), b(1), b'(1) and c(10-14). The alpha and beta chains form an alternating ring which encloses part of the gamma chain. F(1) is attached to F(0) by a central stalk formed by the gamma and epsilon chains, while a peripheral stalk is formed by the delta, b and b' chains.

Its subcellular location is the cellular thylakoid membrane. F(1)F(0) ATP synthase produces ATP from ADP in the presence of a proton or sodium gradient. F-type ATPases consist of two structural domains, F(1) containing the extramembraneous catalytic core and F(0) containing the membrane proton channel, linked together by a central stalk and a peripheral stalk. During catalysis, ATP synthesis in the catalytic domain of F(1) is coupled via a rotary mechanism of the central stalk subunits to proton translocation. In terms of biological role, component of the F(0) channel, it forms part of the peripheral stalk, linking F(1) to F(0). The b'-subunit is a diverged and duplicated form of b found in plants and photosynthetic bacteria. The protein is ATP synthase subunit b' of Synechococcus elongatus (strain ATCC 33912 / PCC 7942 / FACHB-805) (Anacystis nidulans R2).